The primary structure comprises 349 residues: Mitochondrial carrier protein SCaMC-3L (349 aa).

The next 4 membrane-spanning stretches (helical) occupy residues G88–S104, G149–F168, L188–M205, and Y243–Y261. Solcar repeat units lie at residues G88–Y174 and P182–L267.

It belongs to the mitochondrial carrier (TC 2.A.29) family.

It localises to the mitochondrion inner membrane. The enzyme catalyses Mg(2+)(out) + phosphate(in) + ATP(out) = Mg(2+)(in) + phosphate(out) + ATP(in). It carries out the reaction ADP(out) + phosphate(in) + H(+)(out) = ADP(in) + phosphate(out) + H(+)(in). Functionally, calcium-independent ATP-Mg/Pi exchanger that catalyzes the electroneutral exchange of Mg-ATP or free ADP against an hydrogenphosphate and participates in the net transport of adenine nucleotides across the mitochondria inner membrane. The sequence is that of Mitochondrial carrier protein SCaMC-3L from Bos taurus (Bovine).